Consider the following 223-residue polypeptide: Ribose-5-phosphate isomerase A (223 aa).

Residues 32–35 (TGST), 83–86 (DGAD), and 96–99 (KGGG) each bind substrate. Glu-105 serves as the catalytic Proton acceptor. Lys-123 is a binding site for substrate.

This sequence belongs to the ribose 5-phosphate isomerase family. Homodimer.

The enzyme catalyses aldehydo-D-ribose 5-phosphate = D-ribulose 5-phosphate. The protein operates within carbohydrate degradation; pentose phosphate pathway; D-ribose 5-phosphate from D-ribulose 5-phosphate (non-oxidative stage): step 1/1. Its function is as follows. Catalyzes the reversible conversion of ribose-5-phosphate to ribulose 5-phosphate. The polypeptide is Ribose-5-phosphate isomerase A (Acinetobacter baumannii (strain AYE)).